The primary structure comprises 281 residues: Undecaprenyl-diphosphatase (281 aa).

A run of 8 helical transmembrane segments spans residues 1–21 (MNVL…FLPI), 45–65 (WTAF…IYFA), 93–113 (SKLG…GLVF), 125–145 (LIVI…SEVV), 155–175 (ISWL…VPGA), 195–215 (AARF…LLEF), 227–247 (FLVL…TIAF), and 256–276 (STNV…WMVF).

The protein belongs to the UppP family.

It is found in the cell inner membrane. It catalyses the reaction di-trans,octa-cis-undecaprenyl diphosphate + H2O = di-trans,octa-cis-undecaprenyl phosphate + phosphate + H(+). In terms of biological role, catalyzes the dephosphorylation of undecaprenyl diphosphate (UPP). Confers resistance to bacitracin. This chain is Undecaprenyl-diphosphatase, found in Syntrophobacter fumaroxidans (strain DSM 10017 / MPOB).